Reading from the N-terminus, the 117-residue chain is Large ribosomal subunit protein bL19 (117 aa).

This sequence belongs to the bacterial ribosomal protein bL19 family.

Functionally, this protein is located at the 30S-50S ribosomal subunit interface and may play a role in the structure and function of the aminoacyl-tRNA binding site. The chain is Large ribosomal subunit protein bL19 from Vibrio cholerae serotype O1 (strain ATCC 39541 / Classical Ogawa 395 / O395).